A 271-amino-acid chain; its full sequence is Pyrroline-5-carboxylate reductase (271 aa).

This sequence belongs to the pyrroline-5-carboxylate reductase family.

The protein localises to the cytoplasm. It carries out the reaction L-proline + NADP(+) = (S)-1-pyrroline-5-carboxylate + NADPH + 2 H(+). The enzyme catalyses L-proline + NAD(+) = (S)-1-pyrroline-5-carboxylate + NADH + 2 H(+). It functions in the pathway amino-acid biosynthesis; L-proline biosynthesis; L-proline from L-glutamate 5-semialdehyde: step 1/1. Its function is as follows. Catalyzes the reduction of 1-pyrroline-5-carboxylate (PCA) to L-proline. This chain is Pyrroline-5-carboxylate reductase, found in Haemophilus influenzae (strain ATCC 51907 / DSM 11121 / KW20 / Rd).